The following is a 355-amino-acid chain: UDP-N-acetylglucosamine--N-acetylmuramyl-(pentapeptide) pyrophosphoryl-undecaprenol N-acetylglucosamine transferase (355 aa).

Residues 13–15 (TGG), Asn-125, Arg-162, Ser-190, Ile-244, and Gln-289 each bind UDP-N-acetyl-alpha-D-glucosamine.

Belongs to the glycosyltransferase 28 family. MurG subfamily.

It is found in the cell inner membrane. The catalysed reaction is di-trans,octa-cis-undecaprenyl diphospho-N-acetyl-alpha-D-muramoyl-L-alanyl-D-glutamyl-meso-2,6-diaminopimeloyl-D-alanyl-D-alanine + UDP-N-acetyl-alpha-D-glucosamine = di-trans,octa-cis-undecaprenyl diphospho-[N-acetyl-alpha-D-glucosaminyl-(1-&gt;4)]-N-acetyl-alpha-D-muramoyl-L-alanyl-D-glutamyl-meso-2,6-diaminopimeloyl-D-alanyl-D-alanine + UDP + H(+). The protein operates within cell wall biogenesis; peptidoglycan biosynthesis. Its function is as follows. Cell wall formation. Catalyzes the transfer of a GlcNAc subunit on undecaprenyl-pyrophosphoryl-MurNAc-pentapeptide (lipid intermediate I) to form undecaprenyl-pyrophosphoryl-MurNAc-(pentapeptide)GlcNAc (lipid intermediate II). In Neisseria meningitidis serogroup C (strain 053442), this protein is UDP-N-acetylglucosamine--N-acetylmuramyl-(pentapeptide) pyrophosphoryl-undecaprenol N-acetylglucosamine transferase.